A 266-amino-acid polypeptide reads, in one-letter code: Glucosamine-6-phosphate deaminase (266 aa).

Aspartate 72 acts as the Proton acceptor; for enolization step in catalysis. The active-site For ring-opening step is the aspartate 141. Catalysis depends on histidine 143, which acts as the Proton acceptor; for ring-opening step. Catalysis depends on glutamate 148, which acts as the For ring-opening step.

Belongs to the glucosamine/galactosamine-6-phosphate isomerase family. NagB subfamily. In terms of assembly, homohexamer.

It carries out the reaction alpha-D-glucosamine 6-phosphate + H2O = beta-D-fructose 6-phosphate + NH4(+). It participates in amino-sugar metabolism; N-acetylneuraminate degradation; D-fructose 6-phosphate from N-acetylneuraminate: step 5/5. Allosterically activated by N-acetylglucosamine 6-phosphate (GlcNAc6P). Functionally, catalyzes the reversible isomerization-deamination of glucosamine 6-phosphate (GlcN6P) to form fructose 6-phosphate (Fru6P) and ammonium ion. In Aliivibrio salmonicida (strain LFI1238) (Vibrio salmonicida (strain LFI1238)), this protein is Glucosamine-6-phosphate deaminase.